We begin with the raw amino-acid sequence, 612 residues long: Cyclin-dependent kinase 8 (612 aa).

Residues 23–345 (FENSKEIGRG…CEEAMNDIYF (323 aa)) form the Protein kinase domain. Residues 29 to 37 (IGRGTYGLV) and K57 contribute to the ATP site. The active-site Proton acceptor is D155. Low complexity-rich tracts occupy residues 403 to 455 (QQQM…MGQP), 472 to 483 (HQMMQQQHQSQH), 543 to 555 (PQPG…QQRP), 564 to 573 (QGYMNPQMGM), and 600 to 612 (NPQQ…QYHR). Disordered stretches follow at residues 403-483 (QQQM…QSQH) and 543-612 (PQPG…QYHR).

It belongs to the protein kinase superfamily. CMGC Ser/Thr protein kinase family. CDC2/CDKX subfamily. In terms of assembly, component of the Mediator complex. Mg(2+) is required as a cofactor.

It is found in the nucleus. It carries out the reaction L-seryl-[protein] + ATP = O-phospho-L-seryl-[protein] + ADP + H(+). The catalysed reaction is L-threonyl-[protein] + ATP = O-phospho-L-threonyl-[protein] + ADP + H(+). The enzyme catalyses [DNA-directed RNA polymerase] + ATP = phospho-[DNA-directed RNA polymerase] + ADP + H(+). Functionally, component of the Mediator complex, a coactivator involved in regulated gene transcription of nearly all RNA polymerase II-dependent genes. Mediator functions as a bridge to convey information from gene-specific regulatory proteins to the basal RNA polymerase II transcription machinery. Mediator is recruited to promoters by direct interactions with regulatory proteins and serves as a scaffold for the assembly of a functional pre-initiation complex with RNA polymerase II and the general transcription factors. Phosphorylates the CTD (C-terminal domain) of the large subunit of RNA polymerase II (RNAp II), which may inhibit the formation of a transcription initiation complex. The chain is Cyclin-dependent kinase 8 (cdk-8) from Caenorhabditis briggsae.